The primary structure comprises 400 residues: Queuine tRNA-ribosyltransferase catalytic subunit (400 aa).

Asp89 (proton acceptor) is an active-site residue. Substrate is bound by residues 89–93, Asp143, Gln185, and Gly212; that span reads DSGGF. The interval 243-249 is RNA binding; it reads GVGFPVD. Residue Asp262 is the Nucleophile of the active site. Residues 267-271 are RNA binding; important for wobble base 34 recognition; that stretch reads TRTAR. Cys301, Cys303, Cys306, and His331 together coordinate Zn(2+).

This sequence belongs to the queuine tRNA-ribosyltransferase family. Heterodimer of a catalytic subunit and an accessory subunit. Requires Zn(2+) as cofactor.

Its subcellular location is the cytoplasm. It carries out the reaction guanosine(34) in tRNA + queuine = queuosine(34) in tRNA + guanine. Its function is as follows. Catalytic subunit of the queuine tRNA-ribosyltransferase (TGT) that catalyzes the base-exchange of a guanine (G) residue with queuine (Q) at position 34 (anticodon wobble position) in tRNAs with GU(N) anticodons (tRNA-Asp, -Asn, -His and -Tyr), resulting in the hypermodified nucleoside queuosine (7-(((4,5-cis-dihydroxy-2-cyclopenten-1-yl)amino)methyl)-7-deazaguanosine). Catalysis occurs through a double-displacement mechanism. The nucleophile active site attacks the C1' of nucleotide 34 to detach the guanine base from the RNA, forming a covalent enzyme-RNA intermediate. The proton acceptor active site deprotonates the incoming queuine, allowing a nucleophilic attack on the C1' of the ribose to form the product. The sequence is that of Queuine tRNA-ribosyltransferase catalytic subunit from Caenorhabditis briggsae.